The primary structure comprises 527 residues: Glucose-6-phosphate isomerase (527 aa).

Residue Glu323 is the Proton donor of the active site. Catalysis depends on residues His352 and Lys454.

This sequence belongs to the GPI family.

The protein localises to the cytoplasm. The catalysed reaction is alpha-D-glucose 6-phosphate = beta-D-fructose 6-phosphate. Its pathway is carbohydrate biosynthesis; gluconeogenesis. It functions in the pathway carbohydrate degradation; glycolysis; D-glyceraldehyde 3-phosphate and glycerone phosphate from D-glucose: step 2/4. Its function is as follows. Catalyzes the reversible isomerization of glucose-6-phosphate to fructose-6-phosphate. This chain is Glucose-6-phosphate isomerase, found in Prochlorococcus marinus (strain MIT 9515).